The primary structure comprises 150 residues: Single-stranded DNA-binding protein rim1, mitochondrial (150 aa).

A mitochondrion-targeting transit peptide spans 1–22 (MLFLKSSRAFSKRLFSSSTVRY). The SSB domain maps to 25 to 125 (IQRLTLTGNL…HVSADVLFYP (101 aa)). Positions 127-150 (NKNGDESGEETHPELDADPMINSF) are disordered. Basic and acidic residues predominate over residues 128-141 (KNGDESGEETHPEL).

It localises to the mitochondrion. Its function is as follows. This protein binds preferentially and cooperatively to ss-DNA. Involved in mitochondrial DNA replication. The chain is Single-stranded DNA-binding protein rim1, mitochondrial (rim1) from Schizosaccharomyces pombe (strain 972 / ATCC 24843) (Fission yeast).